Reading from the N-terminus, the 340-residue chain is Aspartate-semialdehyde dehydrogenase (340 aa).

NADP(+) is bound by residues 11–14 (TGEV) and 39–40 (RS). Arg-100 serves as a coordination point for phosphate. The Acyl-thioester intermediate role is filled by Cys-131. Residue Gln-158 coordinates substrate. 161 to 162 (SG) contributes to the NADP(+) binding site. A phosphate-binding site is contributed by Lys-216. Arg-238 contributes to the substrate binding site. Catalysis depends on His-245, which acts as the Proton acceptor. Asn-318 contributes to the NADP(+) binding site.

The protein belongs to the aspartate-semialdehyde dehydrogenase family. As to quaternary structure, homodimer.

It catalyses the reaction L-aspartate 4-semialdehyde + phosphate + NADP(+) = 4-phospho-L-aspartate + NADPH + H(+). The protein operates within amino-acid biosynthesis; L-lysine biosynthesis via DAP pathway; (S)-tetrahydrodipicolinate from L-aspartate: step 2/4. It functions in the pathway amino-acid biosynthesis; L-methionine biosynthesis via de novo pathway; L-homoserine from L-aspartate: step 2/3. It participates in amino-acid biosynthesis; L-threonine biosynthesis; L-threonine from L-aspartate: step 2/5. In terms of biological role, catalyzes the NADPH-dependent formation of L-aspartate-semialdehyde (L-ASA) by the reductive dephosphorylation of L-aspartyl-4-phosphate. This Aquifex aeolicus (strain VF5) protein is Aspartate-semialdehyde dehydrogenase.